We begin with the raw amino-acid sequence, 1278 residues long: Cytoplasmic FMR1-interacting protein 2 (1278 aa).

K1062 carries the post-translational modification N6-acetyllysine.

It belongs to the CYFIP family. In terms of assembly, component of the WAVE1 complex composed of ABI2, CYFIP2, BRK1, NCKAP1 and WASF1/WAVE1. Interacts with FMR1, FXR1 and FXR2. Interacts with FMR1 isoform 6; the interaction occurs in a RNA-dependent manner. Interacts with RAC1 (activated form) which causes the complex to dissociate, releasing activated WASF1. The complex can also be activated by NCK1. Interacts with SHANK3; the interaction mediates the association of SHANK3 with the WAVE1 complex. Interacts with TMEM108 (via N-terminus); the interaction associates TMEM108 with the WAVE1 complex. As to expression, expressed in T-cells. Increased expression is observed in CD4(+) T-lymphocytes from patients with multiple sclerosis (at protein level).

Its subcellular location is the cytoplasm. It localises to the nucleus. The protein resides in the perinuclear region. It is found in the synapse. The protein localises to the synaptosome. In terms of biological role, involved in T-cell adhesion and p53/TP53-dependent induction of apoptosis. Does not bind RNA. As component of the WAVE1 complex, required for BDNF-NTRK2 endocytic trafficking and signaling from early endosomes. This is Cytoplasmic FMR1-interacting protein 2 from Homo sapiens (Human).